A 128-amino-acid chain; its full sequence is Leucine-rich single-pass membrane protein 1 (128 aa).

Serine 24 bears the Phosphoserine mark. A helical membrane pass occupies residues valine 65 to isoleucine 85. A coiled-coil region spans residues glutamine 87 to lysine 111.

It is found in the membrane. This chain is Leucine-rich single-pass membrane protein 1 (LSMEM1), found in Bos taurus (Bovine).